Here is a 435-residue protein sequence, read N- to C-terminus: Virulence factor PIT1 (435 aa).

Transmembrane regions (helical) follow at residues 33–53 (ETTT…SEVI), 77–97 (IFFI…ILVT), 111–131 (WAWT…CVIG), 143–163 (VASW…MWTN), and 204–224 (TFWF…ACCI). N-linked (GlcNAc...) asparagine glycosylation is present at N330. The segment covering 392–404 (SPQMPSKAQSQSI) has biased composition (polar residues). Residues 392–435 (SPQMPSKAQSQSIPYKREVEVTVDMSPVPPPPGPSPAPLPAPYM) are disordered. The span at 418–435 (PVPPPPGPSPAPLPAPYM) shows a compositional bias: pro residues.

Post-translationally, O-mannosylated by PMT4. Is also N-glycosylated.

The protein localises to the cell membrane. Functionally, plasma membrane virulence factor required for spreading and inducing tumors in infected leaves. The polypeptide is Virulence factor PIT1 (Mycosarcoma maydis (Corn smut fungus)).